Reading from the N-terminus, the 351-residue chain is Biotin synthase (351 aa).

The region spanning 44 to 262 (NRVQVSTLLS…LAVARILMPQ (219 aa)) is the Radical SAM core domain. Residues Cys-59, Cys-63, and Cys-66 each coordinate [4Fe-4S] cluster. [2Fe-2S] cluster contacts are provided by Cys-103, Cys-134, Cys-194, and Arg-266.

The protein belongs to the radical SAM superfamily. Biotin synthase family. Homodimer. It depends on [4Fe-4S] cluster as a cofactor. [2Fe-2S] cluster is required as a cofactor.

The enzyme catalyses (4R,5S)-dethiobiotin + (sulfur carrier)-SH + 2 reduced [2Fe-2S]-[ferredoxin] + 2 S-adenosyl-L-methionine = (sulfur carrier)-H + biotin + 2 5'-deoxyadenosine + 2 L-methionine + 2 oxidized [2Fe-2S]-[ferredoxin]. It participates in cofactor biosynthesis; biotin biosynthesis; biotin from 7,8-diaminononanoate: step 2/2. Catalyzes the conversion of dethiobiotin (DTB) to biotin by the insertion of a sulfur atom into dethiobiotin via a radical-based mechanism. This Pseudomonas fluorescens (strain Pf0-1) protein is Biotin synthase.